Consider the following 857-residue polypeptide: Mitogen-activated protein kinase kinase kinase dlk-1 (857 aa).

Residues 62-304 enclose the Protein kinase domain; it reads ISNLEWLGSG…FSHIRQHWEI (243 aa). Residues 68–76 and Lys89 contribute to the ATP site; that span reads LGSGSQGAV. Asp173 serves as the catalytic Proton acceptor. 4 disordered regions span residues 441 to 503, 572 to 625, 733 to 775, and 818 to 857; these read EEMS…ISRN, RIAS…PSRN, NAND…MESE, and HSIKTHRRTSSNPQAIIHQRIEEYSSSATEDSDDAGAVRI. Residues 467–488 are compositionally biased toward low complexity; it reads SSGAQSSPFSRQSSCRSSAGQQ. Polar residues predominate over residues 609-623; that stretch reads APRSSSKLNRSSYPS. Residues 753–762 are compositionally biased toward acidic residues; that stretch reads ADVESSEDEG. Positions 763–772 are enriched in polar residues; that stretch reads NGNNILNTSM.

This sequence belongs to the protein kinase superfamily. STE Ser/Thr protein kinase family. MAP kinase kinase kinase subfamily. Mg(2+) is required as a cofactor. In terms of processing, ubiquitinated by rpm-1. Negatively regulated by ubiquitination by fsn-1 bound rpm-1, followed by degradation.

It is found in the synapse. It carries out the reaction L-seryl-[protein] + ATP = O-phospho-L-seryl-[protein] + ADP + H(+). The enzyme catalyses L-threonyl-[protein] + ATP = O-phospho-L-threonyl-[protein] + ADP + H(+). In terms of biological role, component of a MAP kinase pathway that functions presynaptically to regulate synaptic architecture and presynaptic differentiation. Phosphorylates and activates mkk-4. This chain is Mitogen-activated protein kinase kinase kinase dlk-1, found in Caenorhabditis briggsae.